A 95-amino-acid chain; its full sequence is MKLVILLVVVSAMLVLGGAQTASQFYCGDFLARTMSILCWPDMPKRSGSQYAGYGWPWLPPFSSSRGKRGIVDECCYRPCTTDVLKLYCDKQITI.

The N-terminal stretch at 1-19 (MKLVILLVVVSAMLVLGGA) is a signal peptide. Q20 is modified (pyrrolidone carboxylic acid). 3 disulfides stabilise this stretch: C27–C76, C39–C89, and C75–C80. Positions 47 to 67 (SGSQYAGYGWPWLPPFSSSRG) are cleaved as a propeptide — c peptide like.

The protein belongs to the insulin family. In terms of assembly, heterodimer of a B chain and an A chain linked by two disulfide bonds.

The protein resides in the secreted. In terms of biological role, brain peptide responsible for activation of prothoracic glands to produce ecdysone in insects. This chain is Bombyxin C-2 (BBXC2), found in Bombyx mori (Silk moth).